A 348-amino-acid polypeptide reads, in one-letter code: 2-heptyl-4(1H)-quinolone synthase subunit PqsC (348 aa).

Cys129 serves as the catalytic Acyl-thioester intermediate. His269 is an active-site residue.

It belongs to the thiolase-like superfamily. FabH family. As to quaternary structure, forms a tight complex with PqsB.

Its subcellular location is the cytoplasm. The catalysed reaction is (2-aminobenzoyl)acetate + octanoyl-CoA + H(+) = 2-heptyl-4(1H)-quinolone + CO2 + CoA + H2O. With respect to regulation, folding of PqsC and binding of octanoate are promoted by PqsB. Binding of the octanoyl group probably increases the binding affinity of the complex for 2-ABA. Activity of the complex is inhibited by 2-aminoacetophenone (2-AA). Its function is as follows. Required for the biosynthesis of the quorum-sensing signaling molecules 2-heptyl-4(1H)-quinolone (HHQ) and 2-heptyl-3-hydroxy-4(1H)-quinolone (Pseudomonas quinolone signal or PQS), which are important for biofilm formation and virulence. The PqsC/PqsB complex catalyzes the condensation of 2-aminobenzoylacetate (2-ABA) and octanoyl-CoA to form HHQ. First, PqsC acquires an octanoyl group from octanoyl-CoA and forms an octanoyl-PqsC intermediate. Then, together with PqsB, it catalyzes the coupling of 2-ABA with the octanoate group, leading to decarboxylation and dehydration, and resulting in closure of the quinoline ring. This is 2-heptyl-4(1H)-quinolone synthase subunit PqsC from Pseudomonas aeruginosa (strain ATCC 15692 / DSM 22644 / CIP 104116 / JCM 14847 / LMG 12228 / 1C / PRS 101 / PAO1).